The sequence spans 195 residues: MDPKEKKTKQEEELKVDDIQDTVEGQSQNEEATEATEPLTAEEKLEKELKEAQAQIEDQKDKYLRLSAEFDNYRKRTVKEKAELILNGGEKSIKSILPVIDDMERALTTMETATDVNAVKEGVELIYNKFLSILSQDGVKVIETKDQPLDTDYHEAIAVIPAPTEEQKGKILDCVQTGYTLNGKVIRHAKVVVGE.

The span at 1–18 shows a compositional bias: basic and acidic residues; it reads MDPKEKKTKQEEELKVDD. The segment at 1–41 is disordered; sequence MDPKEKKTKQEEELKVDDIQDTVEGQSQNEEATEATEPLTA.

The protein belongs to the GrpE family. As to quaternary structure, homodimer.

The protein localises to the cytoplasm. In terms of biological role, participates actively in the response to hyperosmotic and heat shock by preventing the aggregation of stress-denatured proteins, in association with DnaK and GrpE. It is the nucleotide exchange factor for DnaK and may function as a thermosensor. Unfolded proteins bind initially to DnaJ; upon interaction with the DnaJ-bound protein, DnaK hydrolyzes its bound ATP, resulting in the formation of a stable complex. GrpE releases ADP from DnaK; ATP binding to DnaK triggers the release of the substrate protein, thus completing the reaction cycle. Several rounds of ATP-dependent interactions between DnaJ, DnaK and GrpE are required for fully efficient folding. In Bacteroides fragilis (strain ATCC 25285 / DSM 2151 / CCUG 4856 / JCM 11019 / LMG 10263 / NCTC 9343 / Onslow / VPI 2553 / EN-2), this protein is Protein GrpE.